The chain runs to 266 residues: MKYSGWPEPGELVVGKIDEIEDFGVFVDLDEYEGKRGLCHISEVASGWIKNVRDHVNEGQTVVAKVLDVDESAQQIDLSIKDVNDHQRKEKIQEWKNEQKADNWMELAFGEDLDDETYAAIANELLAEFGSMYDGFESAAIHGKDALEDVDLSEEEIDAIVQTARNNVSVPYVQVTGYVDLSCPESDGVDIIKEALQAAEGNGEVPDEIELEVTYVGSPEYRIQVQAPDYKTAEDALEESADRAAKVVEQHGGSGQFHRERSEDDE.

An S1 motif domain is found at 10–81; it reads GELVVGKIDE…SAQQIDLSIK (72 aa). Residues 233–266 are disordered; the sequence is AEDALEESADRAAKVVEQHGGSGQFHRERSEDDE. Basic and acidic residues-rich tracts occupy residues 240–249 and 257–266; these read SADRAAKVVE and FHRERSEDDE.

This sequence belongs to the eIF-2-alpha family. Heterotrimer composed of an alpha, a beta and a gamma chain.

Its function is as follows. eIF-2 functions in the early steps of protein synthesis by forming a ternary complex with GTP and initiator tRNA. This is Translation initiation factor 2 subunit alpha from Haloarcula marismortui (strain ATCC 43049 / DSM 3752 / JCM 8966 / VKM B-1809) (Halobacterium marismortui).